The chain runs to 496 residues: Glycerol kinase (496 aa).

Residue Thr-11 coordinates ADP. Residues Thr-11, Thr-12, and Ser-13 each coordinate ATP. Thr-11 is a sn-glycerol 3-phosphate binding site. ADP is bound at residue Arg-15. Residues Arg-81, Glu-82, Tyr-133, and Asp-242 each coordinate sn-glycerol 3-phosphate. Positions 81, 82, 133, 242, and 243 each coordinate glycerol. ADP contacts are provided by Thr-264 and Gly-307. ATP contacts are provided by Thr-264, Gly-307, Gln-311, and Gly-408. Gly-408 and Asn-412 together coordinate ADP.

The protein belongs to the FGGY kinase family.

The catalysed reaction is glycerol + ATP = sn-glycerol 3-phosphate + ADP + H(+). It participates in polyol metabolism; glycerol degradation via glycerol kinase pathway; sn-glycerol 3-phosphate from glycerol: step 1/1. Its activity is regulated as follows. Inhibited by fructose 1,6-bisphosphate (FBP). Its function is as follows. Key enzyme in the regulation of glycerol uptake and metabolism. Catalyzes the phosphorylation of glycerol to yield sn-glycerol 3-phosphate. The polypeptide is Glycerol kinase (Aromatoleum aromaticum (strain DSM 19018 / LMG 30748 / EbN1) (Azoarcus sp. (strain EbN1))).